Here is a 409-residue protein sequence, read N- to C-terminus: Polyadenylate-binding protein RBP45 (409 aa).

The disordered stretch occupies residues 1 to 83 (MMPQSGVAQP…PSPTGNPNEV (83 aa)). Residues 19 to 81 (QHQYQQQAPP…PNPSPTGNPN (63 aa)) show a composition bias toward low complexity. 2 RRM domains span residues 84–164 (RSLW…WASL) and 176–255 (HTIF…PAAN). Positions 251 to 280 (GPAANKKPVGTPQKATYQNPQATQGESDPN) are disordered. Polar residues predominate over residues 263–280 (QKATYQNPQATQGESDPN). The RRM 3 domain maps to 282 to 354 (TTIFVGGLDP…QSIRLSWGRS (73 aa)).

This sequence belongs to the polyadenylate-binding RBP45 family. Interacts with the poly(A) tail of mRNA in nucleus. As to expression, constitutively expressed in leaves, roots, and stems.

It localises to the nucleus. Heterogeneous nuclear ribonucleoprotein (hnRNP)-protein binding the poly(A) tail of mRNA and probably involved in some steps of pre-mRNA maturation. The sequence is that of Polyadenylate-binding protein RBP45 (RBP45) from Nicotiana plumbaginifolia (Leadwort-leaved tobacco).